Consider the following 541-residue polypeptide: uncharacterized protein (541 aa).

A signal peptide (tat-type signal) is located at residues 1–55 (MTKTVTRAGGASGPQQFQSGGETMKYEITRRRFLAASSAVLAAPAIVTMVRPARA). The disordered stretch occupies residues 339 to 362 (RRSPSGISSPRSNRQPKAEALSAR). Residues 341–351 (SPSGISSPRSN) are compositionally biased toward low complexity. 4 consecutive transmembrane segments (helical) span residues 379–399 (AIVW…MVFM), 420–440 (LPVL…AHSG), 466–486 (LVSA…GEIA), and 500–520 (VGYF…LAVA).

The protein belongs to the bacterial solute-binding protein 7 family. Post-translationally, predicted to be exported by the Tat system. The position of the signal peptide cleavage has not been experimentally proven.

The protein localises to the cell membrane. This is an uncharacterized protein from Sinorhizobium fredii (strain NBRC 101917 / NGR234).